We begin with the raw amino-acid sequence, 231 residues long: RING finger protein 141 (231 aa).

Gly2 carries N-myristoyl glycine lipidation. The RING-type zinc-finger motif lies at 156–193; that stretch reads CCICMDGRADLILPCAHSFCQKCIDKWSDRHRNCPICR.

It localises to the membrane. Functionally, may be involved in spermatogenesis. The polypeptide is RING finger protein 141 (RNF141) (Canis lupus familiaris (Dog)).